The chain runs to 276 residues: Proteasome subunit beta type-8 (276 aa).

The propeptide at 1–72 (MALLEVCGAP…KNIRKEMVHG (72 aa)) is removed in mature form. Threonine 73 functions as the Nucleophile in the catalytic mechanism.

Belongs to the peptidase T1B family. The 26S proteasome consists of a 20S proteasome core and two 19S regulatory subunits. The 20S proteasome core is composed of 28 subunits that are arranged in four stacked rings, resulting in a barrel-shaped structure. The two end rings are each formed by seven alpha subunits, and the two central rings are each formed by seven beta subunits. The catalytic chamber with the active sites is on the inside of the barrel. Component of the immunoproteasome, where it displaces the equivalent housekeeping subunit PSMB5. Component of the spermatoproteasome, a form of the proteasome specifically found in testis. Directly interacts with POMP. Autocleaved. The resulting N-terminal Thr residue of the mature subunit is responsible for the nucleophile proteolytic activity.

Its subcellular location is the cytoplasm. The protein resides in the nucleus. It catalyses the reaction Cleavage of peptide bonds with very broad specificity.. Its function is as follows. The proteasome is a multicatalytic proteinase complex which is characterized by its ability to cleave peptides with Arg, Phe, Tyr, Leu, and Glu adjacent to the leaving group at neutral or slightly basic pH. The proteasome has an ATP-dependent proteolytic activity. This subunit is involved in antigen processing to generate class I binding peptides. May participate in the generation of spliced peptides resulting from the ligation of two separate proteasomal cleavage products that are not contiguous in the parental protein. Required for adipocyte differentiation. The protein is Proteasome subunit beta type-8 (PSMB8) of Canis lupus familiaris (Dog).